Here is a 379-residue protein sequence, read N- to C-terminus: Queuine tRNA-ribosyltransferase (379 aa).

The Proton acceptor role is filled by Asp94. Substrate is bound by residues 94–98 (DSGGF), Asp148, Gln191, and Gly218. The segment at 249-255 (GVGSPDS) is RNA binding. The active-site Nucleophile is the Asp268. Residues 273-277 (TRIAR) form an RNA binding; important for wobble base 34 recognition region. The Zn(2+) site is built by Cys306, Cys308, Cys311, and His337.

It belongs to the queuine tRNA-ribosyltransferase family. As to quaternary structure, homodimer. Within each dimer, one monomer is responsible for RNA recognition and catalysis, while the other monomer binds to the replacement base PreQ1. It depends on Zn(2+) as a cofactor.

The enzyme catalyses 7-aminomethyl-7-carbaguanine + guanosine(34) in tRNA = 7-aminomethyl-7-carbaguanosine(34) in tRNA + guanine. Its pathway is tRNA modification; tRNA-queuosine biosynthesis. In terms of biological role, catalyzes the base-exchange of a guanine (G) residue with the queuine precursor 7-aminomethyl-7-deazaguanine (PreQ1) at position 34 (anticodon wobble position) in tRNAs with GU(N) anticodons (tRNA-Asp, -Asn, -His and -Tyr). Catalysis occurs through a double-displacement mechanism. The nucleophile active site attacks the C1' of nucleotide 34 to detach the guanine base from the RNA, forming a covalent enzyme-RNA intermediate. The proton acceptor active site deprotonates the incoming PreQ1, allowing a nucleophilic attack on the C1' of the ribose to form the product. After dissociation, two additional enzymatic reactions on the tRNA convert PreQ1 to queuine (Q), resulting in the hypermodified nucleoside queuosine (7-(((4,5-cis-dihydroxy-2-cyclopenten-1-yl)amino)methyl)-7-deazaguanosine). The polypeptide is Queuine tRNA-ribosyltransferase (Listeria monocytogenes serotype 4a (strain HCC23)).